Consider the following 254-residue polypeptide: Triosephosphate isomerase (254 aa).

Residue 9 to 11 (NWK) participates in substrate binding. H95 acts as the Electrophile in catalysis. The Proton acceptor role is filled by E167. Substrate is bound by residues G173, S213, and 234 to 235 (GG).

This sequence belongs to the triosephosphate isomerase family. Homodimer.

The protein resides in the cytoplasm. The enzyme catalyses D-glyceraldehyde 3-phosphate = dihydroxyacetone phosphate. It functions in the pathway carbohydrate biosynthesis; gluconeogenesis. It participates in carbohydrate degradation; glycolysis; D-glyceraldehyde 3-phosphate from glycerone phosphate: step 1/1. Involved in the gluconeogenesis. Catalyzes stereospecifically the conversion of dihydroxyacetone phosphate (DHAP) to D-glyceraldehyde-3-phosphate (G3P). The protein is Triosephosphate isomerase of Roseiflexus castenholzii (strain DSM 13941 / HLO8).